Here is a 325-residue protein sequence, read N- to C-terminus: MYIAVPAEILCLILPLLLGVAFLVLAERKVMAFVQRRKGPDVVGSFGLLQPLADGLKLILKEPISPSSANFFLFRMAPVATFMLSLVAWAVVPFDYGMVLSDLNIGLLYLFAISSLGVYGIIIAGWSSNSKYAFLGALRSAAQMVSYEVSIGLILITVLICVGSCNLSEIVMAQKQIWFGIPLFPVLVMFFISCLAETNRAPFDLPEAEAELVAGYNVEYSSMGFALFFLGEYANMILMSGLCTLLFLGGWLPILDLPISKKIPCSIWFSIKVLLFLFLYIWVRAAFPRYRYDQLMGLGRKVFLPLSLARVVPVSGVSVTFRWLP.

The next 8 helical transmembrane spans lie at 5–25 (VPAE…FLVL), 40–60 (PDVV…KLIL), 79–99 (VATF…YGMV), 105–125 (IGLL…IIAG), 151–171 (IGLI…SEIV), 177–197 (IWFG…CLAE), 237–257 (ILMS…ILDL), and 263–283 (IPCS…YIWV).

The protein belongs to the complex I subunit 1 family.

The protein localises to the mitochondrion inner membrane. It catalyses the reaction a ubiquinone + NADH + 5 H(+)(in) = a ubiquinol + NAD(+) + 4 H(+)(out). Core subunit of the mitochondrial membrane respiratory chain NADH dehydrogenase (Complex I) that is believed to belong to the minimal assembly required for catalysis. Complex I functions in the transfer of electrons from NADH to the respiratory chain. The immediate electron acceptor for the enzyme is believed to be ubiquinone. The sequence is that of NADH-ubiquinone oxidoreductase chain 1 (ND1) from Triticum aestivum (Wheat).